The sequence spans 98 residues: Co-chaperonin GroES (98 aa).

This sequence belongs to the GroES chaperonin family. Heptamer of 7 subunits arranged in a ring. Interacts with the chaperonin GroEL.

Its subcellular location is the cytoplasm. Together with the chaperonin GroEL, plays an essential role in assisting protein folding. The GroEL-GroES system forms a nano-cage that allows encapsulation of the non-native substrate proteins and provides a physical environment optimized to promote and accelerate protein folding. GroES binds to the apical surface of the GroEL ring, thereby capping the opening of the GroEL channel. In Agrobacterium fabrum (strain C58 / ATCC 33970) (Agrobacterium tumefaciens (strain C58)), this protein is Co-chaperonin GroES.